Here is a 343-residue protein sequence, read N- to C-terminus: Squamosa promoter-binding-like protein 11 (343 aa).

The segment at 1–48 (MECNPVSSTTSSSLLWDWDATASAEPPPPPGKRGGRDSSSASASAKRG) is disordered. Low complexity-rich tracts occupy residues 7-19 (SSTT…WDWD) and 37-48 (DSSSASASAKRG). The SBP-type zinc-finger motif lies at 64–141 (APRCQVEGCG…SDHNARRRKP (78 aa)). Zn(2+) contacts are provided by C67, C72, C89, H92, C108, C111, H115, and C127. Residues 124–140 (KRSCRRRLSDHNARRRK) carry the Bipartite nuclear localization signal motif.

As to expression, expressed in stems, leaf sheaths, and young panicles.

It is found in the nucleus. Trans-acting factor that binds specifically to the consensus nucleotide sequence 5'-TNCGTACAA-3'. May be involved in panicle development. The polypeptide is Squamosa promoter-binding-like protein 11 (SPL11) (Oryza sativa subsp. japonica (Rice)).